The sequence spans 320 residues: tRNA U34 carboxymethyltransferase (320 aa).

Carboxy-S-adenosyl-L-methionine is bound by residues K87, W101, K106, G126, 148 to 150 (EPS), 176 to 177 (VE), M192, Y196, and R311.

Belongs to the class I-like SAM-binding methyltransferase superfamily. CmoB family. In terms of assembly, homotetramer.

It carries out the reaction carboxy-S-adenosyl-L-methionine + 5-hydroxyuridine(34) in tRNA = 5-carboxymethoxyuridine(34) in tRNA + S-adenosyl-L-homocysteine + H(+). Functionally, catalyzes carboxymethyl transfer from carboxy-S-adenosyl-L-methionine (Cx-SAM) to 5-hydroxyuridine (ho5U) to form 5-carboxymethoxyuridine (cmo5U) at position 34 in tRNAs. In Desulfotalea psychrophila (strain LSv54 / DSM 12343), this protein is tRNA U34 carboxymethyltransferase.